The chain runs to 632 residues: MSRVRDAGCVAAGIVIGAGAWYCVYKYTRGRDQTKKRMAKPKNRAVAGTGARARAGLRAGFTIDLGSGFSPPTPVRAEAEDRAQDEASALDTVGAEAVAPAASSAEAQSGAGSQAQEADGAGVGPKAESVVGAAMASAIAPPPGVTEALGAAEAPAMAGAPKVAEAPREAETSRAAVPPGTVVPTEAAAPTEVTEGPGVAAPTKVAEAPGVASPTEAAEAPVPATPTGAAAPTGAAESPGTSGSPRTAVVPGTSAAKKATPGAHTGAIPKATSATGAVPKGGGKGVTRSRNGGKGKGKKSKVEVDELGMGFRPGDGAAAAAAASANGGQAFLAEVPDSEEGESGWTDTESDSDSEPETQRRGRGRRPVAMQKRPFPYEIDEILGVRDLRKVLALLQKSDDPFIQQVALLTLSNNANYSCNQETIRKLGGLPIIANMINKTDPHIKEKALMAMNNLSENYENQGRLQVYMNKVMDDIMASNLNSAVQVVGLKFLTNMTITNDYQHLLVNSIANFFRLLSQGGGKIKVEILKILSNFAENPDMLKKLLSTQVPASFSSLYNSYVESEILINALTLFEIIYDNLRAEVFNYREFNKGSLFYLCTTSGVCVKKIRALANHHDLLVKVKVIKLVNKF.

The Mitochondrial intermembrane portion of the chain corresponds to 1–6 (MSRVRD). Positions 1–6 (MSRVRD) are mitochondrion outer membrane (MOM)-targeting sequence. A helical; Signal-anchor transmembrane segment spans residues 7–25 (AGCVAAGIVIGAGAWYCVY). The interval 26–40 (KYTRGRDQTKKRMAK) is mitochondrion outer membrane (MOM)-targeting sequence. At 26–632 (KYTRGRDQTK…VKVIKLVNKF (607 aa)) the chain is on the cytoplasmic side. Disordered stretches follow at residues 68–124 (GFSP…AGVG), 160–304 (APKV…KVEV), and 335–369 (VPDS…RPVA). Low complexity-rich tracts occupy residues 86–120 (EASA…EADG) and 211–241 (VASP…SPGT). A compositionally biased stretch (acidic residues) spans 336-356 (PDSEEGESGWTDTESDSDSEP). 3 ARM repeats span residues 376 to 416 (PYEI…NNAN), 418 to 457 (SCNQ…NLSE), and 498 to 537 (ITND…NFAE).

This sequence belongs to the eutherian X-chromosome-specific Armcx family. As to expression, expressed at high levels ovary, heart, testis, prostate, brain, spleen and colon. Expressed at very low levels in liver and thymus. Not expressed in peripheral blood leukocytes. Not expressed in pancreas and ovarian carcinomas.

It is found in the mitochondrion. Its subcellular location is the mitochondrion outer membrane. In terms of biological role, may regulate the dynamics and distribution of mitochondria in neural cells. This chain is Armadillo repeat-containing X-linked protein 2 (ARMCX2), found in Homo sapiens (Human).